A 124-amino-acid chain; its full sequence is Modulator protein MzrA (124 aa).

The Cytoplasmic segment spans residues 1–7 (MINRRMK). The chain crosses the membrane as a helical span at residues 8–28 (TGFVFHLLLLLLPLVVLVTSS). The Periplasmic portion of the chain corresponds to 29 to 124 (RRTADDVTLH…KLSQQPFKLG (96 aa)).

Belongs to the MzrA family. Interacts with EnvZ.

The protein localises to the cell inner membrane. Its function is as follows. Modulates the activity of the EnvZ/OmpR two-component regulatory system, probably by directly modulating EnvZ enzymatic activity and increasing stability of phosphorylated OmpR. The protein is Modulator protein MzrA of Musicola paradisiaca (strain Ech703) (Dickeya paradisiaca).